A 426-amino-acid chain; its full sequence is D-tagatose-1,6-bisphosphate aldolase subunit KbaZ (426 aa).

This sequence belongs to the GatZ/KbaZ family. KbaZ subfamily. As to quaternary structure, forms a complex with KbaY.

The protein operates within carbohydrate metabolism; D-tagatose 6-phosphate degradation; D-glyceraldehyde 3-phosphate and glycerone phosphate from D-tagatose 6-phosphate: step 2/2. Component of the tagatose-1,6-bisphosphate aldolase KbaYZ that is required for full activity and stability of the Y subunit. Could have a chaperone-like function for the proper and stable folding of KbaY. When expressed alone, KbaZ does not show any aldolase activity. The protein is D-tagatose-1,6-bisphosphate aldolase subunit KbaZ of Escherichia coli O127:H6 (strain E2348/69 / EPEC).